The following is a 350-amino-acid chain: GTPase Obg (350 aa).

An Obg domain is found at 1–159 (MKLVDEAEIL…RLLKLELRLL (159 aa)). The interval 127 to 146 (NMHFKSSVNRAPRQSTTGEE) is disordered. Polar residues predominate over residues 130-143 (FKSSVNRAPRQSTT). The OBG-type G domain occupies 160–337 (ADVGLLGFPN…IMKDVMAFFD (178 aa)). Residues 166-173 (GFPNAGKS), 191-195 (FTTLY), 213-216 (DVPG), 287-290 (NKAD), and 318-320 (SAL) contribute to the GTP site. Serine 173 and threonine 193 together coordinate Mg(2+).

The protein belongs to the TRAFAC class OBG-HflX-like GTPase superfamily. OBG GTPase family. As to quaternary structure, monomer. It depends on Mg(2+) as a cofactor.

Its subcellular location is the cytoplasm. An essential GTPase which binds GTP, GDP and possibly (p)ppGpp with moderate affinity, with high nucleotide exchange rates and a fairly low GTP hydrolysis rate. Plays a role in control of the cell cycle, stress response, ribosome biogenesis and in those bacteria that undergo differentiation, in morphogenesis control. In Xanthomonas oryzae pv. oryzae (strain MAFF 311018), this protein is GTPase Obg.